A 291-amino-acid polypeptide reads, in one-letter code: Small ribosomal subunit protein uS2 (291 aa).

The segment at N270–N291 is disordered.

The protein belongs to the universal ribosomal protein uS2 family.

The sequence is that of Small ribosomal subunit protein uS2 from Rickettsia bellii (strain OSU 85-389).